We begin with the raw amino-acid sequence, 748 residues long: Junctophilin-3 (748 aa).

The Cytoplasmic portion of the chain corresponds to 1–727; it reads MSSGGRFNFD…LKSSTGSAPI (727 aa). MORN repeat units lie at residues 15–37, 39–60, 61–82, 83–105, 107–129, and 130–152; these read YCGG…KGQG, YTGS…SGNT, YQGT…GKWV, YKGE…GNGA, YEGT…DGGT, and YQGQ…PYGM. Residues 230–259 form a disordered region; it reads SKSSLASQRSKQSSFRSEAGMSTVSSTASD. The segment covering 231-244 has biased composition (low complexity); that stretch reads KSSLASQRSKQSSF. Residues 249 to 259 are compositionally biased toward polar residues; sequence GMSTVSSTASD. MORN repeat units follow at residues 288-310 and 311-333; these read YVGE…DGLK and YEGE…DGTK. A disordered region spans residues 416 to 496; the sequence is AKEFSPSFQH…TPPPAPAARN (81 aa). At S440 the chain carries Phosphoserine. Residues 448-457 show a composition bias toward polar residues; it reads STGTPLQQES. Phosphothreonine is present on T451. S457 carries the post-translational modification Phosphoserine. Residue T471 is modified to Phosphothreonine. A phosphoserine mark is found at S475 and S506. 2 disordered regions span residues 526–597 and 624–649; these read CARS…SPGG and HPQK…EDRG. Over residues 639 to 649 the composition is skewed to basic and acidic residues; it reads LGDDHRPEDRG. 2 positions are modified to phosphoserine: S703 and S710. Residues 728 to 748 traverse the membrane as a helical; Anchor for type IV membrane protein segment; sequence LVVMVILLNIGVAILFINFFI.

This sequence belongs to the junctophilin family. In terms of tissue distribution, specifically expressed in brain.

It localises to the cell membrane. Its subcellular location is the endoplasmic reticulum membrane. In terms of biological role, junctophilins contribute to the formation of junctional membrane complexes (JMCs) which link the plasma membrane with the endoplasmic or sarcoplasmic reticulum in excitable cells. Provides a structural foundation for functional cross-talk between the cell surface and intracellular calcium release channels. JPH3 is brain-specific and appears to have an active role in certain neurons involved in motor coordination and memory. The sequence is that of Junctophilin-3 (JPH3) from Homo sapiens (Human).